Here is a 122-residue protein sequence, read N- to C-terminus: Large ribosomal subunit protein uL14c (122 aa).

The protein belongs to the universal ribosomal protein uL14 family. Part of the 50S ribosomal subunit.

It is found in the plastid. Its function is as follows. Binds to 23S rRNA. This Euglena longa (Euglenophycean alga) protein is Large ribosomal subunit protein uL14c.